The chain runs to 554 residues: Pigment biosynthesis transcriptional activator pigB (554 aa).

The disordered stretch occupies residues 1–21 (MFTSSSPEQRKPRQSRQLPGA). The segment at residues 23 to 40 (CEECRRKKLRCDRQQPQC) is a DNA-binding region (zn(2)-C6 fungal-type).

It localises to the nucleus. Functionally, transcription factor; part of the gene cluster that mediates the biosynthesis of azaphilone pigments (MonAzPs), a complex mixture of compounds with a common azaphilone skeleton very widely used as food colorants. Positively regulates the expression of the azaphilone pigments (MonAzPs) gene cluster. This is Pigment biosynthesis transcriptional activator pigB from Monascus ruber (Mold).